A 286-amino-acid chain; its full sequence is MTTDHAGKKVDVVVVGNVDGEHVGVEQARHDLHEEAAAAAAADHHATRGLAIGFLIREVMVEGLASFLVVFWSCVAALMQEMYGTLTFPMVCLVVAMTVAFVLSWLGPAHFNPAVTITFAAYRRFPVWPKLPLYVAAQLAGSLLACLSVNAVMRPRHDHFYGTAPVVVHGTRLPFLMEFLASAVLMIVIATVATDGTAGKTVGGIAIGAAVGGLGLVIGPVSGGSMNPARTLGPAIVLGRYDGVWIYVVAPVAGMLVGALCNRAVRLSHRIVAFLCGTSVGIAGSP.

Helical transmembrane passes span 59–79 (VMVE…AALM) and 86–106 (LTFP…LSWL). The NPA 1 motif lies at 112-114 (NPA). The next 3 helical transmembrane spans lie at 133 to 153 (LYVA…NAVM), 173 to 193 (LPFL…ATVA), and 201 to 221 (TVGG…IGPV). Positions 227–229 (NPA) match the NPA 2 motif. A helical transmembrane segment spans residues 241–261 (YDGVWIYVVAPVAGMLVGALC).

Belongs to the MIP/aquaporin (TC 1.A.8) family. NIP (TC 1.A.8.12) subfamily. As to expression, expressed in leaves and at lower levels in roots.

The protein resides in the membrane. Functionally, aquaporins facilitate the transport of water and small neutral solutes across cell membranes. This chain is Aquaporin NIP4-1 (NIP4-1), found in Oryza sativa subsp. japonica (Rice).